Consider the following 228-residue polypeptide: Enolase-phosphatase E1 (228 aa).

Belongs to the HAD-like hydrolase superfamily. MasA/MtnC family. As to quaternary structure, monomer. The cofactor is Mg(2+).

It catalyses the reaction 5-methylsulfanyl-2,3-dioxopentyl phosphate + H2O = 1,2-dihydroxy-5-(methylsulfanyl)pent-1-en-3-one + phosphate. The protein operates within amino-acid biosynthesis; L-methionine biosynthesis via salvage pathway; L-methionine from S-methyl-5-thio-alpha-D-ribose 1-phosphate: step 3/6. It participates in amino-acid biosynthesis; L-methionine biosynthesis via salvage pathway; L-methionine from S-methyl-5-thio-alpha-D-ribose 1-phosphate: step 4/6. In terms of biological role, bifunctional enzyme that catalyzes the enolization of 2,3-diketo-5-methylthiopentyl-1-phosphate (DK-MTP-1-P) into the intermediate 2-hydroxy-3-keto-5-methylthiopentenyl-1-phosphate (HK-MTPenyl-1-P), which is then dephosphorylated to form the acireductone 1,2-dihydroxy-3-keto-5-methylthiopentene (DHK-MTPene). The polypeptide is Enolase-phosphatase E1 (Picosynechococcus sp. (strain ATCC 27264 / PCC 7002 / PR-6) (Agmenellum quadruplicatum)).